Here is a 500-residue protein sequence, read N- to C-terminus: Oryzalexin D synthase (500 aa).

Residues 4–24 (SQMWLLWGALSVALFFYFSTL) traverse the membrane as a helical segment. Cysteine 442 provides a ligand contact to heme.

The protein belongs to the cytochrome P450 family. Requires heme as cofactor.

It localises to the membrane. It catalyses the reaction ent-cassa-12,15-diene + reduced [NADPH--hemoprotein reductase] + O2 = ent-11beta-hydroxycassa-12,15-diene + oxidized [NADPH--hemoprotein reductase] + H2O + H(+). The enzyme catalyses ent-sandaracopimaradien-3beta-ol + reduced [NADPH--hemoprotein reductase] + O2 = oryzalexin D + oxidized [NADPH--hemoprotein reductase] + H2O + H(+). Functionally, enzyme of the diterpenoid metabolism involved in the biosynthesis of both phytocassane and the oryzalexin class of phytoalexins. Can hydroxylate syn-pimaradiene, ent-pimaradiene, ent-sandaracopimaradiene, ent-isokaurene, ent-kaurene, and ent-cassadiene, but no activity with syn-stemodene, syn-stemarene, syn-labdatriene, C11-alpha-hydroxy-ent-cassadiene or syn-pimadien-19-oic acid as substrates. Hydroxylates 3-alpha-hydroxy-ent-sandaracopimaradiene at C-7-beta, resulting in a 3-alpha,7-beta-diol corresponding to oryzalexins D. The sequence is that of Oryzalexin D synthase from Oryza sativa subsp. japonica (Rice).